The sequence spans 485 residues: Zinc finger SWIM domain-containing protein 1 (485 aa).

The segment at 363-405 (MNIQILEDTHKVQPQPPASCSCYFNQAFHLPCRHILAMLSARR) adopts an SWIM-type zinc-finger fold.

In Homo sapiens (Human), this protein is Zinc finger SWIM domain-containing protein 1 (ZSWIM1).